Here is a 3948-residue protein sequence, read N- to C-terminus: Hybrid PKS-NRPS synthetase ucsA (3948 aa).

The Ketosynthase family 3 (KS3) domain maps to 11–440 (NEPIAVIGSG…GTNAHAILER (430 aa)). Active-site for beta-ketoacyl synthase activity residues include Cys184, His323, and His363. The malonyl-CoA:ACP transacylase (MAT) domain stretch occupies residues 548–881 (IFTGQGAQWP…FSTAIGQLWA (334 aa)). The interval 940-1079 (HPLLGTLGAD…GHIRLTITDF (140 aa)) is N-terminal hotdog fold. Residues 940 to 1254 (HPLLGTLGAD…IRLIPFAAAS (315 aa)) form a dehydratase (DH) domain region. One can recognise a PKS/mFAS DH domain in the interval 940–1256 (HPLLGTLGAD…LIPFAAASEA (317 aa)). His972 functions as the Proton acceptor; for dehydratase activity in the catalytic mechanism. Residues 1098-1256 (MTEVDQNLFY…LIPFAAASEA (159 aa)) form a C-terminal hotdog fold region. Residue Asp1161 is the Proton donor; for dehydratase activity of the active site. The segment at 1299–1460 (LAHVVGQITH…LRAGFTGVET (162 aa)) is methyltransferase (MT) domain. The segment at 1989–2165 (TYILFGLAGA…ASVIDIGPIS (177 aa)) is ketoreductase (KR) domain. Residues 2275–2357 (DVARVLRHAI…GLVDFAVDNL (83 aa)) enclose the Carrier 1 domain. Residue Ser2317 is modified to O-(pantetheine 4'-phosphoryl)serine. The segment covering 2381–2404 (PKAKTDAPAAAPTPASATAPGSKS) has biased composition (low complexity). The tract at residues 2381–2473 (PKAKTDAPAA…SSQAASLESS (93 aa)) is disordered. 2 stretches are compositionally biased toward polar residues: residues 2405–2418 (DGNV…ADQS) and 2426–2437 (PQPTAILTNATA). Positions 2441–2456 (PVSPSLSVTGSTSSAA) are enriched in low complexity. Residues 2462 to 2473 (PTSSQAASLESS) are compositionally biased toward polar residues. A condensation (C) domain region spans residues 2489 to 2926 (EKTLPMSYGQ…PQIFNSSKVQ (438 aa)). The tract at residues 2950-3355 (DIAAVQPTLT…GEFVLQARIK (406 aa)) is adenylation (A) (KR) domain. Positions 3483–3507 (PLTNKGGLKETPVARPTRYQNDPIP) are disordered. Residues 3513 to 3592 (SSPFSSLDQV…QMASLLDGKD (80 aa)) form the Carrier 2 domain. Ser3552 carries the post-translational modification O-(pantetheine 4'-phosphoryl)serine. Residues 3633-3852 (LTGATGFLGL…QFVPVEDVAN (220 aa)) are reductase (R) domain.

The protein in the C-terminal section; belongs to the NRP synthetase family.

Its pathway is mycotoxin biosynthesis. Its function is as follows. Hybrid PKS-NRPS synthetase; part of the gene cluster that mediates the biosynthesis of UCS1025A, a member of the pyrrolizidinone family that acts as a strong telomerase inhibitor and displays potent antibacterial and antitumor properties. These compounds share a hemiaminal-containing pyrrolizidinone core fused with a gamma-lactone, giving a furopyrrolizidine that is connected to a decalin fragment. The polyketide synthase module (PKS) of the PKS-NRPS ucsA is responsible for the synthesis of the polyketide backbone via the condensation of an acetyl-CoA starter unit with 6 malonyl-CoA units. The downstream nonribosomal peptide synthetase (NRPS) module then amidates the carboxyl end of the polyketide with a 2S,3S-methylproline derived from L-isoleucine by the 2-oxoglutarate-dependent dioxygenase ucsF which converts L-isoleucine to (4S,5S)-4-methylpyrroline-5-carboxylate that is further converted to 2S,3S-methylproline by the pyrroline-5-carboxylate reductase ucsG. Reductive release of the completed aminoacyl polyketide from the assembly line can form the 3-pyrrolin-2-one structure via an intramolecular Knoevenagel reaction. Because ucsA lacks a designated enoylreductase (ER) domain, the required activity is provided the enoyl reductase ucsL. This keto acyclic precursor is the substrate of the Diels-Alderase ucsH, that catalyzes the Diels-Alder cycloaddition. Oxidation of the 3S-methyl group to a carboxylate by the cytochrome P450 monooxygenase ucsK allows an oxa-Michael cyclization that might involve the reductase/dehydrogenase ucsI and which furnishes the furopyrrolizidine. The oxidase ucsJ likely plays a critical role in stereoselective reduction of the C5-C6 double bond to afford the required R-configured carboxylate group. Further enolization and oxidation at C5 by an unidentified enzyme affords the last intermediate that can undergo oxa-Michael cyclization to yield UCS1025A. The chain is Hybrid PKS-NRPS synthetase ucsA from Acremonium sp.